The primary structure comprises 116 residues: MASMKVVCVALIMCIVIAPMAESAITCGRVDTALAPCLGYLQGGPGPSAQCCGGVRNLNSAAVTTPDRQAACNCLKSAAGSISRLNANNAAALPGKCVVNIPYKISTSTNCATIRV.

Positions 1 to 23 (MASMKVVCVALIMCIVIAPMAES) are cleaved as a signal peptide. 4 disulfide bridges follow: C27-C74, C37-C51, C52-C97, and C72-C111.

The protein belongs to the plant LTP family.

Plant non-specific lipid-transfer proteins transfer phospholipids as well as galactolipids across membranes. May play a role in wax or cutin deposition in the cell walls of expanding epidermal cells and certain secretory tissues. The chain is Non-specific lipid-transfer protein from Cicer arietinum (Chickpea).